The chain runs to 164 residues: Two-component response regulator ARR16 (164 aa).

In terms of domain architecture, Response regulatory spans 30 to 160 (HVLAVDDNLI…DVEKLKCHLM (131 aa)). D93 is modified (4-aspartylphosphate).

The protein belongs to the ARR family. Type-A subfamily. Two-component system major event consists of a His-to-Asp phosphorelay between a sensor histidine kinase (HK) and a response regulator (RR). In plants, the His-to-Asp phosphorelay involves an additional intermediate named Histidine-containing phosphotransfer protein (HPt). This multistep phosphorelay consists of a His-Asp-His-Asp sequential transfer of a phosphate group between first a His and an Asp of the HK protein, followed by the transfer to a conserved His of the HPt protein and finally the transfer to an Asp in the receiver domain of the RR protein.

The protein localises to the nucleus. In terms of biological role, functions as a response regulator involved in His-to-Asp phosphorelay signal transduction system. Phosphorylation of the Asp residue in the receiver domain activates the ability of the protein to promote the transcription of target genes. Type-A response regulators seem to act as negative regulators of the cytokinin signaling. The polypeptide is Two-component response regulator ARR16 (ARR16) (Arabidopsis thaliana (Mouse-ear cress)).